Reading from the N-terminus, the 418-residue chain is Putative ion-transport protein YfeO (418 aa).

Transmembrane regions (helical) follow at residues 10–30 (LLLS…LIVV), 54–74 (DSPL…GLVI), 99–119 (ALPG…SLGP), 120–140 (EHPI…RLLP), 149–169 (ILAS…AALI), 186–206 (LFAP…FFHP), 223–243 (ILSG…AVWC), 258–278 (VLVL…GGPV), 300–320 (DYFL…ASGF), 322–342 (GGRI…LHEH), 343–363 (VPAV…VLVV), and 371–391 (LFMA…CIVM).

It belongs to the chloride channel (TC 2.A.49) family.

It is found in the cell membrane. The polypeptide is Putative ion-transport protein YfeO (Shigella boydii serotype 4 (strain Sb227)).